We begin with the raw amino-acid sequence, 518 residues long: Membrane-bound lytic murein transglycosylase F (518 aa).

The N-terminal stretch at 1–21 (MKKLKINYLFIGILALLLAVA) is a signal peptide. The segment at 22–269 (LWPSIPWFGK…RIEEKYLGHG (248 aa)) is non-LT domain. The segment at 270–518 (DDFDYVDTRT…SRKGSEEKQN (249 aa)) is LT domain. Glu314 is a catalytic residue.

In the N-terminal section; belongs to the bacterial solute-binding protein 3 family. This sequence in the C-terminal section; belongs to the transglycosylase Slt family.

Its subcellular location is the cell outer membrane. The catalysed reaction is Exolytic cleavage of the (1-&gt;4)-beta-glycosidic linkage between N-acetylmuramic acid (MurNAc) and N-acetylglucosamine (GlcNAc) residues in peptidoglycan, from either the reducing or the non-reducing ends of the peptidoglycan chains, with concomitant formation of a 1,6-anhydrobond in the MurNAc residue.. Its function is as follows. Murein-degrading enzyme that degrades murein glycan strands and insoluble, high-molecular weight murein sacculi, with the concomitant formation of a 1,6-anhydromuramoyl product. Lytic transglycosylases (LTs) play an integral role in the metabolism of the peptidoglycan (PG) sacculus. Their lytic action creates space within the PG sacculus to allow for its expansion as well as for the insertion of various structures such as secretion systems and flagella. The sequence is that of Membrane-bound lytic murein transglycosylase F from Escherichia coli O6:K15:H31 (strain 536 / UPEC).